The chain runs to 481 residues: 3-isopropylmalate dehydratase large subunit (481 aa).

Residues cysteine 357, cysteine 417, and cysteine 420 each coordinate [4Fe-4S] cluster.

It belongs to the aconitase/IPM isomerase family. LeuC type 1 subfamily. Heterodimer of LeuC and LeuD. Requires [4Fe-4S] cluster as cofactor.

The catalysed reaction is (2R,3S)-3-isopropylmalate = (2S)-2-isopropylmalate. The protein operates within amino-acid biosynthesis; L-leucine biosynthesis; L-leucine from 3-methyl-2-oxobutanoate: step 2/4. In terms of biological role, catalyzes the isomerization between 2-isopropylmalate and 3-isopropylmalate, via the formation of 2-isopropylmaleate. This Maricaulis maris (strain MCS10) (Caulobacter maris) protein is 3-isopropylmalate dehydratase large subunit.